The primary structure comprises 438 residues: Ribosome biogenesis protein NOP53 (438 aa).

Disordered regions lie at residues 1-23 (MVAG…WRKG) and 247-346 (HPKY…RKKE). Residues 12–21 (GSRHNKKYWR) are compositionally biased toward basic residues. Composition is skewed to basic and acidic residues over residues 265-288 (KSMK…MTKE), 297-318 (QKLD…DSHN), and 325-346 (LHKE…RKKE).

Belongs to the NOP53 family.

The protein localises to the nucleus. It localises to the nucleolus. It is found in the nucleoplasm. Functionally, may play a role in ribosome biogenesis, being required for integration of the 5S RNP into the ribosomal large subunit. This Caenorhabditis elegans protein is Ribosome biogenesis protein NOP53.